Here is a 261-residue protein sequence, read N- to C-terminus: Snake venom serine protease (261 aa).

The signal sequence occupies residues 1-20 (MALIGVLANLLILCLSYART). Residues 21–24 (APDR) constitute a propeptide that is removed on maturation. Residues 25-249 (IIGGLECNQN…YIDWIQDIMA (225 aa)) enclose the Peptidase S1 domain. 6 disulfides stabilise this stretch: Cys-31–Cys-163, Cys-50–Cys-66, Cys-98–Cys-256, Cys-142–Cys-210, Cys-174–Cys-189, and Cys-200–Cys-225. His-65 (charge relay system) is an active-site residue. Asn-103 is a glycosylation site (N-linked (GlcNAc...) asparagine). The active-site Charge relay system is Asp-110. N-linked (GlcNAc...) asparagine glycans are attached at residues Asn-117 and Asn-121. Ser-204 (charge relay system) is an active-site residue.

This sequence belongs to the peptidase S1 family. Snake venom subfamily. As to quaternary structure, monomer. As to expression, expressed by the venom gland.

It localises to the secreted. Functionally, snake venom serine protease that may act in the hemostasis system of the prey. The chain is Snake venom serine protease from Philodryas olfersii (Green snake).